We begin with the raw amino-acid sequence, 706 residues long: Glycine--tRNA ligase beta subunit (706 aa).

This sequence belongs to the class-II aminoacyl-tRNA synthetase family. In terms of assembly, tetramer of two alpha and two beta subunits.

The protein localises to the cytoplasm. The enzyme catalyses tRNA(Gly) + glycine + ATP = glycyl-tRNA(Gly) + AMP + diphosphate. This is Glycine--tRNA ligase beta subunit from Hyphomonas neptunium (strain ATCC 15444).